Reading from the N-terminus, the 331-residue chain is 5-formaminoimidazole-4-carboxamide-1-(beta)-D-ribofuranosyl 5'-monophosphate synthetase (331 aa).

5-amino-1-(5-phospho-beta-D-ribosyl)imidazole-4-carboxamide-binding residues include His9 and Ser69. Positions 76 to 322 (VELVEKMKVP…IAMELKQGLE (247 aa)) constitute an ATP-grasp domain. Residues 120–179 (PDDI…VPVY) and Glu201 contribute to the ATP site. Residue Asn229 participates in 5-amino-1-(5-phospho-beta-D-ribosyl)imidazole-4-carboxamide binding. Mg(2+) contacts are provided by Glu267 and Glu280.

The protein belongs to the phosphohexose mutase family. Requires Mg(2+) as cofactor. Mn(2+) serves as cofactor.

It catalyses the reaction 5-amino-1-(5-phospho-beta-D-ribosyl)imidazole-4-carboxamide + formate + ATP = 5-formamido-1-(5-phospho-D-ribosyl)imidazole-4-carboxamide + ADP + phosphate. Its pathway is purine metabolism; IMP biosynthesis via de novo pathway; 5-formamido-1-(5-phospho-D-ribosyl)imidazole-4-carboxamide from 5-amino-1-(5-phospho-D-ribosyl)imidazole-4-carboxamide (formate route): step 1/1. Functionally, catalyzes the ATP- and formate-dependent formylation of 5-aminoimidazole-4-carboxamide-1-beta-d-ribofuranosyl 5'-monophosphate (AICAR) to 5-formaminoimidazole-4-carboxamide-1-beta-d-ribofuranosyl 5'-monophosphate (FAICAR) in the absence of folates. The sequence is that of 5-formaminoimidazole-4-carboxamide-1-(beta)-D-ribofuranosyl 5'-monophosphate synthetase from Thermococcus kodakarensis (strain ATCC BAA-918 / JCM 12380 / KOD1) (Pyrococcus kodakaraensis (strain KOD1)).